The sequence spans 627 residues: MCGIVGYIGTQAATDILLAGLEKLEYRGYDSAGIATVWEGEINCVRAKGKLHNLRSKLELIETPAQIGIGHTRWATHGKPEEYNAHPHVDTAMPVAVQNGIIENYRELREELKAKGHVFRSETDTEVIPHLIAEILKNFSASSSSSDFLEAVSQAVNRLEGAFALAVVCADYPDELIVVRQQAPLVIGFGQGEFFCASDTPAIVAYTRAVLPLENGEIARLTPLGIEIYNFAGHRLKKQPRLLNLNPTMVVKTGFKHFMLKEIHEQPGVVRASLEAYFNNGRGKWRSPINLRLPENLYTDLEQIHIVACGTSWHAALIGKYLIEQLAGISTQVHYASEYRYAPSPLTSNTLIIGVTQSGETADTLAALAMEKERRQGKEAKYEARLLGITNRPESSLLSHLVPNIISTLAGIEIGVLATKTFTAQLMAFYALALDLAAHRQTASKETLEKIINGLREIPKDIESTLESQERLTEQLAHEFAETQDFIFLGRGINFPIALEGALKLKEISYIHAEGYPAGEMKHGPIALLDAKVPVVAIAVPGSVYEKVISNAQEAKARDSRLIGVTPVKDGEAGEIFNDLLPVSHVEELLSPLLTVVPLQLLAYHIAARRGLDVDQPRNLAKSVTVE.

C2 (nucleophile; for GATase activity) is an active-site residue. The 223-residue stretch at 2–224 (CGIVGYIGTQ…NGEIARLTPL (223 aa)) folds into the Glutamine amidotransferase type-2 domain. 2 SIS domains span residues 293 to 442 (LPEN…HRQT) and 476 to 617 (LAHE…VDQP). K622 functions as the For Fru-6P isomerization activity in the catalytic mechanism.

As to quaternary structure, homodimer.

It is found in the cytoplasm. The enzyme catalyses D-fructose 6-phosphate + L-glutamine = D-glucosamine 6-phosphate + L-glutamate. In terms of biological role, catalyzes the first step in hexosamine metabolism, converting fructose-6P into glucosamine-6P using glutamine as a nitrogen source. The protein is Glutamine--fructose-6-phosphate aminotransferase [isomerizing] of Nostoc sp. (strain PCC 9229).